The sequence spans 419 residues: L-rhamnose isomerase (419 aa).

His-262, Asp-294, and Asp-296 together coordinate Mn(2+).

It belongs to the rhamnose isomerase family. As to quaternary structure, homotetramer. The cofactor is Mn(2+).

The protein resides in the cytoplasm. It carries out the reaction L-rhamnopyranose = L-rhamnulose. Its pathway is carbohydrate degradation; L-rhamnose degradation; glycerone phosphate from L-rhamnose: step 1/3. In terms of biological role, catalyzes the interconversion of L-rhamnose and L-rhamnulose. This Salmonella enteritidis PT4 (strain P125109) protein is L-rhamnose isomerase.